The following is a 602-amino-acid chain: Non structural protein VP9' (602 aa).

It is found in the host cytoplasm. In Callospermophilus lateralis (Golden-mantled ground squirrel), this protein is Non structural protein VP9'.